We begin with the raw amino-acid sequence, 508 residues long: tRNA-2-methylthio-N(6)-dimethylallyladenosine synthase (508 aa).

Residues 13–131 (KTYEVRTYGC…LPVLLERARV (119 aa)) form the MTTase N-terminal domain. [4Fe-4S] cluster is bound by residues Cys-22, Cys-60, Cys-94, Cys-168, Cys-172, and Cys-175. In terms of domain architecture, Radical SAM core spans 154-385 (RESAYAAWVS…ALQEEISWDE (232 aa)). The region spanning 387 to 455 (KKQVGRTLEL…PHHLLAEGPV (69 aa)) is the TRAM domain.

This sequence belongs to the methylthiotransferase family. MiaB subfamily. In terms of assembly, monomer. The cofactor is [4Fe-4S] cluster.

The protein localises to the cytoplasm. The catalysed reaction is N(6)-dimethylallyladenosine(37) in tRNA + (sulfur carrier)-SH + AH2 + 2 S-adenosyl-L-methionine = 2-methylsulfanyl-N(6)-dimethylallyladenosine(37) in tRNA + (sulfur carrier)-H + 5'-deoxyadenosine + L-methionine + A + S-adenosyl-L-homocysteine + 2 H(+). Its function is as follows. Catalyzes the methylthiolation of N6-(dimethylallyl)adenosine (i(6)A), leading to the formation of 2-methylthio-N6-(dimethylallyl)adenosine (ms(2)i(6)A) at position 37 in tRNAs that read codons beginning with uridine. In Streptomyces avermitilis (strain ATCC 31267 / DSM 46492 / JCM 5070 / NBRC 14893 / NCIMB 12804 / NRRL 8165 / MA-4680), this protein is tRNA-2-methylthio-N(6)-dimethylallyladenosine synthase.